Reading from the N-terminus, the 2124-residue chain is AMB antimetabolite synthetase AmbE (2124 aa).

Residues 456 to 847 (LRAALQPQAP…LGRIDEQVKI (392 aa)) are adenylation. The methyltransferase stretch occupies residues 950 to 1147 (DVGANIGLFS…DLLRRHGFEV (198 aa)). A Carrier 1 domain is found at 1251 to 1325 (APANATEAAL…ELARLLAAPA (75 aa)). The residue at position 1286 (Ser1286) is an O-(pantetheine 4'-phosphoryl)serine. The segment at 1359–1780 (DAYPMTSLQQ…ALLGDPVQPP (422 aa)) is condensation. One can recognise a Carrier 2 domain in the interval 1785-1859 (AEDSVELRRV…EVVRRCHAAD (75 aa)). At Ser1819 the chain carries O-(pantetheine 4'-phosphoryl)serine. Positions 1886–2107 (RLIALPPAGG…AAEEVCAILR (222 aa)) are thioesterase.

The protein belongs to the NRP synthetase family. Requires pantetheine 4'-phosphate as cofactor.

It carries out the reaction holo-[peptidyl-carrier protein] + L-glutamate + ATP = L-glutamyl-[peptidyl-carrier protein] + AMP + diphosphate. Involved in the biosynthesis of the antimetabolite L-2-amino-4-methoxy-trans-3-butenoic acid (AMB), a non-proteinogenic amino acid which is toxic for prokaryotes and eukaryotes. Adenylates L-glutamate and loads it onto its first peptidyl carrier domain via a thioester linkage to the phosphopanthetheine moiety. The second peptidyl carrier domain is loaded with a L-alanine activated by AmbB. After formation by AmbB of the L-Glu-L-Ala dipeptide at the first carrier domain of AmbE, the condensation domain of AmbE probably condenses this dipeptide with the L-Ala residue attached at the second carrier domain of AmbE to give the L-Ala-L-Glu-L-Ala tripeptide. The central amino acid, L-Glu, would then undergo a series of modifications to be converted into AMB while the two flanking L-Ala residues remain in place. Finally, the L-Ala-AMB-L-Ala tripeptide is probably released by thioester cleavage via the thioester domain of AmbE. This Pseudomonas aeruginosa (strain ATCC 15692 / DSM 22644 / CIP 104116 / JCM 14847 / LMG 12228 / 1C / PRS 101 / PAO1) protein is AMB antimetabolite synthetase AmbE.